Here is a 355-residue protein sequence, read N- to C-terminus: Phenylalanine--tRNA ligase alpha subunit (355 aa).

Position 273 (Glu-273) interacts with Mg(2+).

The protein belongs to the class-II aminoacyl-tRNA synthetase family. Phe-tRNA synthetase alpha subunit type 1 subfamily. Tetramer of two alpha and two beta subunits. It depends on Mg(2+) as a cofactor.

The protein localises to the cytoplasm. The enzyme catalyses tRNA(Phe) + L-phenylalanine + ATP = L-phenylalanyl-tRNA(Phe) + AMP + diphosphate + H(+). The sequence is that of Phenylalanine--tRNA ligase alpha subunit from Bifidobacterium adolescentis (strain ATCC 15703 / DSM 20083 / NCTC 11814 / E194a).